The sequence spans 522 residues: ATP synthase subunit alpha 2 (522 aa).

176–183 (GDRQTGKT) lines the ATP pocket.

The protein belongs to the ATPase alpha/beta chains family. F-type ATPases have 2 components, CF(1) - the catalytic core - and CF(0) - the membrane proton channel. CF(1) has five subunits: alpha(3), beta(3), gamma(1), delta(1), epsilon(1). CF(0) has three main subunits: a(1), b(2) and c(9-12). The alpha and beta chains form an alternating ring which encloses part of the gamma chain. CF(1) is attached to CF(0) by a central stalk formed by the gamma and epsilon chains, while a peripheral stalk is formed by the delta and b chains.

The protein localises to the cell inner membrane. It carries out the reaction ATP + H2O + 4 H(+)(in) = ADP + phosphate + 5 H(+)(out). Functionally, produces ATP from ADP in the presence of a proton gradient across the membrane. The alpha chain is a regulatory subunit. The polypeptide is ATP synthase subunit alpha 2 (Syntrophotalea carbinolica (strain DSM 2380 / NBRC 103641 / GraBd1) (Pelobacter carbinolicus)).